A 300-amino-acid polypeptide reads, in one-letter code: Putative S-adenosyl-L-methionine-dependent methyltransferase MUL_0817 (300 aa).

S-adenosyl-L-methionine is bound by residues Asp-127 and 156-157 (DL).

Belongs to the UPF0677 family.

Functionally, exhibits S-adenosyl-L-methionine-dependent methyltransferase activity. The protein is Putative S-adenosyl-L-methionine-dependent methyltransferase MUL_0817 of Mycobacterium ulcerans (strain Agy99).